Consider the following 285-residue polypeptide: Ubiquinone biosynthesis protein COQ4, mitochondrial (285 aa).

A mitochondrion-targeting transit peptide spans Met1–Thr11. Residues His166, Asp167, His170, and Glu182 each coordinate Zn(2+).

The protein belongs to the COQ4 family. Component of a multi-subunit COQ enzyme complex, composed of at least COQ3, COQ4, COQ5, COQ6, COQ7 and COQ9. It depends on Zn(2+) as a cofactor.

Its subcellular location is the mitochondrion inner membrane. The enzyme catalyses a 4-hydroxy-3-methoxy-5-(all-trans-polyprenyl)benzoate + H(+) = a 2-methoxy-6-(all-trans-polyprenyl)phenol + CO2. It participates in cofactor biosynthesis; ubiquinone biosynthesis. Functionally, lyase that catalyzes the C1-decarboxylation of 4-hydroxy-3-methoxy-5-(all-trans-polyprenyl)benzoic acid into 2-methoxy-6-(all-trans-polyprenyl)phenol during ubiquinone biosynthesis. This is Ubiquinone biosynthesis protein COQ4, mitochondrial from Paracoccidioides lutzii (strain ATCC MYA-826 / Pb01) (Paracoccidioides brasiliensis).